The sequence spans 163 residues: Probable phosphotransferase enzyme IIB component M6_Spy0801 (163 aa).

In terms of domain architecture, PTS EIIB type-4 spans 1–163 (MITQIRVDDR…TKVHLSQLVN (163 aa)). His-13 functions as the Pros-phosphohistidine intermediate in the catalytic mechanism.

The protein localises to the cytoplasm. In terms of biological role, the phosphoenolpyruvate-dependent sugar phosphotransferase system (sugar PTS), a major carbohydrate active -transport system, catalyzes the phosphorylation of incoming sugar substrates concomitantly with their translocation across the cell membrane. The protein is Probable phosphotransferase enzyme IIB component M6_Spy0801 of Streptococcus pyogenes serotype M6 (strain ATCC BAA-946 / MGAS10394).